Reading from the N-terminus, the 552-residue chain is Nucleolar complex protein 4 (552 aa).

It belongs to the CBF/MAK21 family. As to quaternary structure, interacts with NOP14 and MPP10. Interacts with snoRNA U3. Component of the ribosomal small subunit (SSU) processome composed of at least 40 protein subunits and snoRNA U3.

The protein localises to the nucleus. The protein resides in the nucleolus. Involved in nucleolar processing of pre-18S ribosomal RNA and ribosome assembly. Has a role in the nuclear export of 40S pre-ribosomal subunit to the cytoplasm. Its subcellular location and association with pre-40S subunit are unaffected by RPS19 disruptions, suggesting it acts before the ribosomal protein. In Saccharomyces cerevisiae (strain ATCC 204508 / S288c) (Baker's yeast), this protein is Nucleolar complex protein 4 (NOC4).